The sequence spans 108 residues: Large ribosomal subunit protein uL24 (108 aa).

This sequence belongs to the universal ribosomal protein uL24 family. In terms of assembly, part of the 50S ribosomal subunit.

Functionally, one of two assembly initiator proteins, it binds directly to the 5'-end of the 23S rRNA, where it nucleates assembly of the 50S subunit. One of the proteins that surrounds the polypeptide exit tunnel on the outside of the subunit. This is Large ribosomal subunit protein uL24 from Geotalea daltonii (strain DSM 22248 / JCM 15807 / FRC-32) (Geobacter daltonii).